Reading from the N-terminus, the 324-residue chain is Beta-ketoacyl-[acyl-carrier-protein] synthase III (324 aa).

Cys-112 is a catalytic residue. The interval 181 to 202 (TDGSRGQNLTSGNNPLRSPFSD) is disordered. Polar residues predominate over residues 184-196 (SRGQNLTSGNNPL). His-249 is an active-site residue. Residues 250-254 (QANRR) are ACP-binding. The active site involves Asn-279.

The protein belongs to the thiolase-like superfamily. FabH family. Homodimer.

The protein resides in the cytoplasm. It carries out the reaction malonyl-[ACP] + acetyl-CoA + H(+) = 3-oxobutanoyl-[ACP] + CO2 + CoA. It functions in the pathway lipid metabolism; fatty acid biosynthesis. Its function is as follows. Catalyzes the condensation reaction of fatty acid synthesis by the addition to an acyl acceptor of two carbons from malonyl-ACP. Catalyzes the first condensation reaction which initiates fatty acid synthesis and may therefore play a role in governing the total rate of fatty acid production. Possesses both acetoacetyl-ACP synthase and acetyl transacylase activities. Its substrate specificity determines the biosynthesis of branched-chain and/or straight-chain of fatty acids. This Streptococcus uberis (strain ATCC BAA-854 / 0140J) protein is Beta-ketoacyl-[acyl-carrier-protein] synthase III.